Reading from the N-terminus, the 142-residue chain is Hemoglobin subunit pi (142 aa).

A Globin domain is found at 2 to 142 (TLTQAEKAAV…VSSVLTEKYR (141 aa)). Residues His-59 and His-88 each coordinate heme b.

This sequence belongs to the globin family.

Functionally, the pi' chain is the counterpart of the alpha chain in the major early embryonic hemoglobin P. The polypeptide is Hemoglobin subunit pi (Cairina moschata (Muscovy duck)).